Consider the following 155-residue polypeptide: Sperm microtubule associated protein 1 (155 aa).

This Mus musculus (Mouse) protein is Sperm microtubule associated protein 1 (Spmap1).